A 782-amino-acid polypeptide reads, in one-letter code: E3 ubiquitin-protein ligase SopA (782 aa).

The tract at residues 137–171 (VSVSANNRPTVSEGRTPPVSPSLSLQATSSPSSPA) is disordered. The segment covering 157–171 (PSLSLQATSSPSSPA) has biased composition (low complexity). The active-site Glycyl thioester intermediate is the Cys753.

It belongs to the SopA E3 ligase family. Post-translationally, ubiquitinated in the presence of host E1 ubiquitin-activating enzyme, E2 ubiquitin-conjugating enzyme and ubiquitin.

The protein resides in the secreted. It is found in the host cell. It catalyses the reaction S-ubiquitinyl-[E2 ubiquitin-conjugating enzyme]-L-cysteine + [acceptor protein]-L-lysine = [E2 ubiquitin-conjugating enzyme]-L-cysteine + N(6)-ubiquitinyl-[acceptor protein]-L-lysine.. Its function is as follows. Effector proteins function to alter host cell physiology and promote bacterial survival in host tissues. This protein is an E3 ubiquitin ligase that interferes with host's ubiquitination pathway. For instance, prevents host innate immune response by ubiquitinating and thus sending to degradation host E3 ubiquitin ligases TRIM56 and TRIM65. This chain is E3 ubiquitin-protein ligase SopA (sopA), found in Salmonella typhimurium (strain 14028s / SGSC 2262).